The sequence spans 248 residues: 3-deoxy-manno-octulosonate cytidylyltransferase (248 aa).

It belongs to the KdsB family.

Its subcellular location is the cytoplasm. The enzyme catalyses 3-deoxy-alpha-D-manno-oct-2-ulosonate + CTP = CMP-3-deoxy-beta-D-manno-octulosonate + diphosphate. The protein operates within nucleotide-sugar biosynthesis; CMP-3-deoxy-D-manno-octulosonate biosynthesis; CMP-3-deoxy-D-manno-octulosonate from 3-deoxy-D-manno-octulosonate and CTP: step 1/1. It participates in bacterial outer membrane biogenesis; lipopolysaccharide biosynthesis. In terms of biological role, activates KDO (a required 8-carbon sugar) for incorporation into bacterial lipopolysaccharide in Gram-negative bacteria. In Escherichia coli (strain K12 / MC4100 / BW2952), this protein is 3-deoxy-manno-octulosonate cytidylyltransferase.